A 539-amino-acid polypeptide reads, in one-letter code: Carotene epsilon-monooxygenase, chloroplastic (539 aa).

A chloroplast-targeting transit peptide spans M1–R36. C487 is a heme binding site.

This sequence belongs to the cytochrome P450 family. The cofactor is heme.

The protein localises to the plastid. The protein resides in the chloroplast. It catalyses the reaction alpha-carotene + reduced [NADPH--hemoprotein reductase] + O2 = alpha-cryptoxanthin + oxidized [NADPH--hemoprotein reductase] + H2O + H(+). The catalysed reaction is zeinoxanthin + reduced [NADPH--hemoprotein reductase] + O2 = lutein + oxidized [NADPH--hemoprotein reductase] + H2O + H(+). Functionally, heme-containing cytochrome P450 involved in the biosynthesis of xanthophylls. Specific for epsilon- and beta-ring hydroxylation of alpha-carotene. Has only a low activity toward the beta-rings of beta-carotene. The preferred substrate in planta is not alpha-carotene but the epsilon-ring of zeinoxanthin. Possesses a major beta-carotene hydroxylase activity in planta when depleted in its preferred substrate alpha-carotene. In Arabidopsis thaliana (Mouse-ear cress), this protein is Carotene epsilon-monooxygenase, chloroplastic (CYP97C1).